We begin with the raw amino-acid sequence, 414 residues long: Protein phosphatase 2C homolog 3 (414 aa).

One can recognise a PPM-type phosphatase domain in the interval 23–288; the sequence is LYGLSSMQGW…DNMTVCIVAL (266 aa). Residues D62, G63, D230, and D279 each contribute to the Mn(2+) site. Disordered regions lie at residues 313–368 and 380–414; these read APPE…TNGS and FPHK…SAAD. A compositionally biased stretch (basic and acidic residues) spans 350–363; the sequence is GYDKDANENSKEDD. Positions 390–400 are enriched in polar residues; the sequence is SSETDIVNSNK. Residues 401-414 are compositionally biased toward basic and acidic residues; that stretch reads DVADDHKEAVSAAD.

This sequence belongs to the PP2C family. In terms of assembly, monomer. Mg(2+) serves as cofactor. It depends on Mn(2+) as a cofactor.

The protein resides in the cytoplasm. Its subcellular location is the nucleus. It carries out the reaction O-phospho-L-seryl-[protein] + H2O = L-seryl-[protein] + phosphate. The catalysed reaction is O-phospho-L-threonyl-[protein] + H2O = L-threonyl-[protein] + phosphate. Functionally, dephosphorylating regulator for many key proteins. Has an important role in osmotic stability and cell shape control. It may negatively regulate the osmosensing signal transmitted through wis1 map kinase. The sequence is that of Protein phosphatase 2C homolog 3 (ptc3) from Schizosaccharomyces pombe (strain 972 / ATCC 24843) (Fission yeast).